Here is a 159-residue protein sequence, read N- to C-terminus: Cyanate hydratase (159 aa).

Catalysis depends on residues R103, E106, and S129.

Belongs to the cyanase family.

It catalyses the reaction cyanate + hydrogencarbonate + 3 H(+) = NH4(+) + 2 CO2. Its function is as follows. Catalyzes the reaction of cyanate with bicarbonate to produce ammonia and carbon dioxide. This is Cyanate hydratase from Blastomyces gilchristii (strain SLH14081) (Blastomyces dermatitidis).